A 197-amino-acid chain; its full sequence is uncharacterized protein (197 aa).

One can recognise a PfpI endopeptidase domain in the interval 29 to 166 (DWSVHTVSLD…FTNLILEMID (138 aa)). Catalysis depends on cysteine 98, which acts as the Nucleophile.

The protein belongs to the peptidase C56 family.

This is an uncharacterized protein from Bacillus subtilis (strain 168).